A 264-amino-acid polypeptide reads, in one-letter code: H-2 class II histocompatibility antigen, E-B beta chain (264 aa).

A signal peptide spans 1–26; sequence MVWLPRVPCVAAVILLLTVLSPPMAL. The segment at 27–121 is beta-1; the sequence is VRDSRPWFLE…ISDKFLVRRR (95 aa). Topologically, residues 27 to 225 are extracellular; it reads VRDSRPWFLE…KAQSTSAQNK (199 aa). 2 disulfides stabilise this stretch: C38-C106 and C144-C200. N46 is a glycosylation site (N-linked (GlcNAc...) asparagine). The beta-2 stretch occupies residues 122–225; it reads VEPTVTVYPT…KAQSTSAQNK (104 aa). Positions 124-214 constitute an Ig-like C1-type domain; that stretch reads PTVTVYPTKT…PSLTDPVTVE (91 aa). Residues 226-246 traverse the membrane as a helical segment; sequence MLSGVGGFVLGLLFLGAGLFI. The Cytoplasmic segment spans residues 247 to 264; that stretch reads YFRNQKGQSGLQPTGLLS.

Belongs to the MHC class II family. Post-translationally, ubiquitinated in immature dendritic cells leading to down-regulation of MHC class II.

Its subcellular location is the membrane. This Mus musculus (Mouse) protein is H-2 class II histocompatibility antigen, E-B beta chain (H2-Eb1).